A 374-amino-acid chain; its full sequence is Putative glutamate--cysteine ligase 2 (374 aa).

This sequence belongs to the glutamate--cysteine ligase type 2 family. YbdK subfamily.

It carries out the reaction L-cysteine + L-glutamate + ATP = gamma-L-glutamyl-L-cysteine + ADP + phosphate + H(+). Functionally, ATP-dependent carboxylate-amine ligase which exhibits weak glutamate--cysteine ligase activity. In Laribacter hongkongensis (strain HLHK9), this protein is Putative glutamate--cysteine ligase 2.